We begin with the raw amino-acid sequence, 309 residues long: Probable porphobilinogen deaminase (309 aa).

At C233 the chain carries S-(dipyrrolylmethanemethyl)cysteine.

Belongs to the HMBS family. Dipyrromethane is required as a cofactor.

The catalysed reaction is 4 porphobilinogen + H2O = hydroxymethylbilane + 4 NH4(+). It functions in the pathway porphyrin-containing compound metabolism; protoporphyrin-IX biosynthesis; coproporphyrinogen-III from 5-aminolevulinate: step 2/4. Functionally, tetrapolymerization of the monopyrrole PBG into the hydroxymethylbilane pre-uroporphyrinogen in several discrete steps. This Methanococcoides burtonii (strain DSM 6242 / NBRC 107633 / OCM 468 / ACE-M) protein is Probable porphobilinogen deaminase.